Reading from the N-terminus, the 436-residue chain is GTPase Obg (436 aa).

In terms of domain architecture, Obg spans 2–160; sequence SMFLDTAKVS…RELALELKIL (159 aa). Residues 161-338 form the OBG-type G domain; it reads ADVGLVGFPS…LLDATAQLLA (178 aa). GTP contacts are provided by residues 167-174, 192-196, 214-217, 284-287, and 319-321; these read GFPSVGKS, FTTIV, DLPG, NKMD, and SGI. Mg(2+) contacts are provided by S174 and T194. An OCT domain is found at 358–436; it reads GFEEEEKAFD…IGKFEFEFVD (79 aa).

It belongs to the TRAFAC class OBG-HflX-like GTPase superfamily. OBG GTPase family. Monomer. Requires Mg(2+) as cofactor.

Its subcellular location is the cytoplasm. Functionally, an essential GTPase which binds GTP, GDP and possibly (p)ppGpp with moderate affinity, with high nucleotide exchange rates and a fairly low GTP hydrolysis rate. Plays a role in control of the cell cycle, stress response, ribosome biogenesis and in those bacteria that undergo differentiation, in morphogenesis control. This chain is GTPase Obg, found in Streptococcus mutans serotype c (strain ATCC 700610 / UA159).